We begin with the raw amino-acid sequence, 624 residues long: tRNA uridine 5-carboxymethylaminomethyl modification enzyme MnmG (624 aa).

Residues 13 to 18 (GGGHAG), Val-125, and Ser-180 contribute to the FAD site. 273–287 (GPRYCPSIEDKIVRF) is a binding site for NAD(+). Position 370 (Gln-370) interacts with FAD.

Belongs to the MnmG family. Homodimer. Heterotetramer of two MnmE and two MnmG subunits. The cofactor is FAD.

Its subcellular location is the cytoplasm. Its function is as follows. NAD-binding protein involved in the addition of a carboxymethylaminomethyl (cmnm) group at the wobble position (U34) of certain tRNAs, forming tRNA-cmnm(5)s(2)U34. The polypeptide is tRNA uridine 5-carboxymethylaminomethyl modification enzyme MnmG (Legionella pneumophila (strain Corby)).